Consider the following 141-residue polypeptide: Drosulfakinins (141 aa).

A signal peptide spans methionine 1–threonine 33. A propeptide spanning residues threonine 34–aspartate 73 is cleaved from the precursor. Positions lysine 51–glycine 72 are disordered. At phenylalanine 82 the chain carries Phenylalanine amide. Residues valine 86 to alanine 111 constitute a propeptide that is removed on maturation. Residue tyrosine 117 is modified to Sulfotyrosine. At phenylalanine 122 the chain carries Phenylalanine amide. Tyrosine 134 is modified (sulfotyrosine). Phenylalanine 139 carries the phenylalanine amide modification.

This sequence belongs to the gastrin/cholecystokinin family.

The protein resides in the secreted. Its function is as follows. Drosulfakinin-0 (DSK 0) plays diverse biological roles including regulating gut muscle contraction in adults but not in larvae. This chain is Drosulfakinins, found in Drosophila mauritiana (Fruit fly).